We begin with the raw amino-acid sequence, 511 residues long: 2-isopropylmalate synthase (511 aa).

A Pyruvate carboxyltransferase domain is found at 4 to 266 (IRIFDTTLRD…ETGIDLSQLY (263 aa)). The Mn(2+) site is built by aspartate 13, histidine 201, histidine 203, and asparagine 237. Residues 391–511 (VLEKIRVVSG…IAANARAQKN (121 aa)) form a regulatory domain region.

The protein belongs to the alpha-IPM synthase/homocitrate synthase family. LeuA type 1 subfamily. In terms of assembly, homodimer. The cofactor is Mn(2+).

It is found in the cytoplasm. The enzyme catalyses 3-methyl-2-oxobutanoate + acetyl-CoA + H2O = (2S)-2-isopropylmalate + CoA + H(+). Its pathway is amino-acid biosynthesis; L-leucine biosynthesis; L-leucine from 3-methyl-2-oxobutanoate: step 1/4. Catalyzes the condensation of the acetyl group of acetyl-CoA with 3-methyl-2-oxobutanoate (2-ketoisovalerate) to form 3-carboxy-3-hydroxy-4-methylpentanoate (2-isopropylmalate). This is 2-isopropylmalate synthase from Acetivibrio thermocellus (strain ATCC 27405 / DSM 1237 / JCM 9322 / NBRC 103400 / NCIMB 10682 / NRRL B-4536 / VPI 7372) (Clostridium thermocellum).